Reading from the N-terminus, the 153-residue chain is Transcriptional repressor NrdR (153 aa).

Residues 1 to 20 are disordered; it reads MKCPFCNSADTRVKNSRHSD. Residues 3–34 fold into a zinc finger; it reads CPFCNSADTRVKNSRHSDDNMSVRRRRLCEVC. Residues 11–20 show a composition bias toward basic and acidic residues; that stretch reads TRVKNSRHSD. The ATP-cone domain maps to 49–139; that stretch reads IMVLKKDGRM…VYMDFSDADD (91 aa).

It belongs to the NrdR family. It depends on Zn(2+) as a cofactor.

Its function is as follows. Negatively regulates transcription of bacterial ribonucleotide reductase nrd genes and operons by binding to NrdR-boxes. In Anaplasma phagocytophilum (strain HZ), this protein is Transcriptional repressor NrdR.